The following is a 234-amino-acid chain: Eosinophil granule major basic protein 2 (234 aa).

The N-terminal stretch at 1-15 (MKLLLLLALLVGAVS) is a signal peptide. Positions 16 to 115 (TRHLNVDTSS…VKFEGSPGCK (100 aa)) are cleaved as a propeptide — acidic. A disordered region spans residues 26-96 (LQSLQGEESL…SSELDMGPED (71 aa)). O-linked (Xyl...) (glycosaminoglycan) serine glycosylation is present at Ser69. Residues 71–94 (SEDDPEEEEEEKEMESSSELDMGP) show a composition bias toward acidic residues. The C-type lectin domain maps to 133-234 (SVCQRCFRGN…GVRRAFSCSY (102 aa)). 2 disulfide bridges follow: Cys135-Cys232 and Cys209-Cys224.

Post-translationally, nitrated.

Its subcellular location is the cytoplasmic granule. MBP may play some important roles in the allergic reactions and inflammations, since MBP is capable of releasing histamine from mast cells and damaging the epithelial cells of bronchial tubes. Antiparasitic and antibiotic. The protein is Eosinophil granule major basic protein 2 (MBP2) of Cavia porcellus (Guinea pig).